A 213-amino-acid chain; its full sequence is Pyridoxine/pyridoxamine 5'-phosphate oxidase (213 aa).

Residues 10–13 (REEY) and lysine 68 contribute to the substrate site. FMN-binding positions include 63 to 68 (RMLLLK), 78 to 79 (FT), lysine 85, and glutamine 107. Residues tyrosine 125, arginine 129, and serine 133 each contribute to the substrate site. FMN contacts are provided by residues 142–143 (QS) and tryptophan 186. 192-194 (RLH) serves as a coordination point for substrate. Arginine 196 lines the FMN pocket.

The protein belongs to the pyridoxamine 5'-phosphate oxidase family. Homodimer. It depends on FMN as a cofactor.

The enzyme catalyses pyridoxamine 5'-phosphate + O2 + H2O = pyridoxal 5'-phosphate + H2O2 + NH4(+). The catalysed reaction is pyridoxine 5'-phosphate + O2 = pyridoxal 5'-phosphate + H2O2. The protein operates within cofactor metabolism; pyridoxal 5'-phosphate salvage; pyridoxal 5'-phosphate from pyridoxamine 5'-phosphate: step 1/1. It functions in the pathway cofactor metabolism; pyridoxal 5'-phosphate salvage; pyridoxal 5'-phosphate from pyridoxine 5'-phosphate: step 1/1. Catalyzes the oxidation of either pyridoxine 5'-phosphate (PNP) or pyridoxamine 5'-phosphate (PMP) into pyridoxal 5'-phosphate (PLP). This is Pyridoxine/pyridoxamine 5'-phosphate oxidase from Nocardioides sp. (strain ATCC BAA-499 / JS614).